A 352-amino-acid chain; its full sequence is 4-hydroxy-2-oxovalerate aldolase 4 (352 aa).

One can recognise a Pyruvate carboxyltransferase domain in the interval 9–261; that stretch reads IRVTDSSLRD…RTGIDTLKII (253 aa). 17-18 serves as a coordination point for substrate; it reads RD. Aspartate 18 contributes to the Mn(2+) binding site. Histidine 21 acts as the Proton acceptor in catalysis. Positions 171 and 200 each coordinate substrate. Residues histidine 200 and histidine 202 each coordinate Mn(2+). Substrate is bound at residue tyrosine 291.

This sequence belongs to the 4-hydroxy-2-oxovalerate aldolase family.

The enzyme catalyses (S)-4-hydroxy-2-oxopentanoate = acetaldehyde + pyruvate. The chain is 4-hydroxy-2-oxovalerate aldolase 4 from Rhodococcus jostii (strain RHA1).